A 350-amino-acid chain; its full sequence is Uroporphyrinogen decarboxylase (350 aa).

Residues 28-32, Phe47, Asp78, Tyr155, Ser210, and His325 each bind substrate; that span reads RQAGR.

It belongs to the uroporphyrinogen decarboxylase family. Homodimer.

The protein localises to the cytoplasm. It catalyses the reaction uroporphyrinogen III + 4 H(+) = coproporphyrinogen III + 4 CO2. It functions in the pathway porphyrin-containing compound metabolism; protoporphyrin-IX biosynthesis; coproporphyrinogen-III from 5-aminolevulinate: step 4/4. In terms of biological role, catalyzes the decarboxylation of four acetate groups of uroporphyrinogen-III to yield coproporphyrinogen-III. The protein is Uroporphyrinogen decarboxylase of Nostoc sp. (strain PCC 7120 / SAG 25.82 / UTEX 2576).